The primary structure comprises 103 residues: Heme-copper oxidase subunit 4 (103 aa).

Transmembrane regions (helical) follow at residues 20–40, 42–62, and 75–95; these read VWIV…EGIA, NPFV…ALFF, and ITVS…TSVL.

It is found in the cell membrane. This Aeropyrum pernix (strain ATCC 700893 / DSM 11879 / JCM 9820 / NBRC 100138 / K1) protein is Heme-copper oxidase subunit 4 (aoxC).